The primary structure comprises 317 residues: MSVQGPQRRLLGSVNSTSPAAPRLGLAANQTGPRCLEVSVPDGLFLSLGLVSVVENVLVVAAIAKNRNLHSPMYYFICCLAVSDLLVSVSSVLETAVMLLLEAGTLAGRAAVVQQLDDIIDVLVCGAMVSSLCFLGAIAVDRYISIFYALRYHSIVTLPRAWRAISAIWVASVLSSTLFIAYYDHTAVLLCLVSFFVAMLVLMAVLYVHMLARACQHARGIARLHKRQRPVHQGLGLKGAATLTILLGIFFLCWGPFFLHLSLMVLCPRHPICGCVFKNFNLFLTLIICNSIVDPLIYAFRSQELRKTLREVLLCSW.

Residues 1 to 37 are Extracellular-facing; that stretch reads MSVQGPQRRLLGSVNSTSPAAPRLGLAANQTGPRCLE. 2 N-linked (GlcNAc...) asparagine glycosylation sites follow: Asn15 and Asn29. Residues 38–63 traverse the membrane as a helical segment; that stretch reads VSVPDGLFLSLGLVSVVENVLVVAAI. The Cytoplasmic segment spans residues 64 to 72; the sequence is AKNRNLHSP. The chain crosses the membrane as a helical span at residues 73–93; the sequence is MYYFICCLAVSDLLVSVSSVL. Topologically, residues 94-118 are extracellular; the sequence is ETAVMLLLEAGTLAGRAAVVQQLDD. A helical membrane pass occupies residues 119–140; that stretch reads IIDVLVCGAMVSSLCFLGAIAV. Topologically, residues 141–163 are cytoplasmic; sequence DRYISIFYALRYHSIVTLPRAWR. Residues 164–183 form a helical membrane-spanning segment; that stretch reads AISAIWVASVLSSTLFIAYY. Residues 184–191 lie on the Extracellular side of the membrane; the sequence is DHTAVLLC. A helical transmembrane segment spans residues 192 to 211; the sequence is LVSFFVAMLVLMAVLYVHML. The Cytoplasmic portion of the chain corresponds to 212–240; sequence ARACQHARGIARLHKRQRPVHQGLGLKGA. Residues 241-266 form a helical membrane-spanning segment; that stretch reads ATLTILLGIFFLCWGPFFLHLSLMVL. The Extracellular portion of the chain corresponds to 267–279; it reads CPRHPICGCVFKN. Residues 280–300 traverse the membrane as a helical segment; the sequence is FNLFLTLIICNSIVDPLIYAF. At 301–317 the chain is on the cytoplasmic side; it reads RSQELRKTLREVLLCSW. The S-palmitoyl cysteine moiety is linked to residue Cys315.

It belongs to the G-protein coupled receptor 1 family. Interacts with MGRN1, but does not undergo MGRN1-mediated ubiquitination; this interaction competes with GNAS-binding and thus inhibits agonist-induced cAMP production. Interacts with OPN3; the interaction results in a decrease in MC1R-mediated cAMP signaling and ultimately a decrease in melanin production in melanocytes.

The protein localises to the cell membrane. Functionally, receptor for MSH (alpha, beta and gamma) and ACTH. The activity of this receptor is mediated by G proteins which activate adenylate cyclase. Mediates melanogenesis, the production of eumelanin (black/brown) and phaeomelanin (red/yellow), via regulation of cAMP signaling in melanocytes. The chain is Melanocyte-stimulating hormone receptor (MC1R) from Puma yagouaroundi (Jaguarundi).